The chain runs to 349 residues: MCASFSPTLDSRSRQLLRTLISCYIQNGEPIGSKTLAQQAGLDISPATIRNILADLEELGLLNSPHTSAGRVPTAHGYRMFVDSLVQMQPPSEDDIRRLRVEMTGGGTQTLLGSASEILSAMTHFVGVVSAPRREQFVFRHIDFVPLDARQIMAILIFADNEVQNRVIEPRRVYEPGELERVSNYLNAHFIGRTLADIRTTVLCELRKAKDEMEQLLAHSLDLASQMLVPNDSEDIVVTGQTRLMALQDLSDMDRLRELFEIFASKREILQLLERTIDAPGVRIFIGEETGMVSMEDISLVTAPYAAHGQVLGVLGVIGPKRMAYDRVIPLVQVVAQVLGTALEPPTMP.

Belongs to the HrcA family.

In terms of biological role, negative regulator of class I heat shock genes (grpE-dnaK-dnaJ and groELS operons). Prevents heat-shock induction of these operons. The protein is Heat-inducible transcription repressor HrcA of Xylella fastidiosa (strain M23).